Here is a 390-residue protein sequence, read N- to C-terminus: 8-amino-7-oxononanoate synthase (390 aa).

Arginine 20 serves as a coordination point for substrate. 107–108 contributes to the pyridoxal 5'-phosphate binding site; sequence GF. Histidine 132 is a substrate binding site. Pyridoxal 5'-phosphate contacts are provided by residues serine 179, 204–207, and 235–238; these read DDAH and TLSK. N6-(pyridoxal phosphate)lysine is present on lysine 238. Threonine 352 serves as a coordination point for substrate.

It belongs to the class-II pyridoxal-phosphate-dependent aminotransferase family. BioF subfamily. As to quaternary structure, homodimer. It depends on pyridoxal 5'-phosphate as a cofactor.

The enzyme catalyses 6-carboxyhexanoyl-[ACP] + L-alanine + H(+) = (8S)-8-amino-7-oxononanoate + holo-[ACP] + CO2. Its pathway is cofactor biosynthesis; biotin biosynthesis. Its function is as follows. Catalyzes the decarboxylative condensation of pimeloyl-[acyl-carrier protein] and L-alanine to produce 8-amino-7-oxononanoate (AON), [acyl-carrier protein], and carbon dioxide. This Exiguobacterium sibiricum (strain DSM 17290 / CCUG 55495 / CIP 109462 / JCM 13490 / 255-15) protein is 8-amino-7-oxononanoate synthase.